Here is a 347-residue protein sequence, read N- to C-terminus: Probable RNA methyltransferase azo0122 (347 aa).

Glu89 serves as the catalytic Proton acceptor. The 227-residue stretch at Leu92–Asp318 folds into the Radical SAM core domain. Cys99 and Cys323 form a disulfide bridge. [4Fe-4S] cluster-binding residues include Cys106, Cys110, and Cys113. S-adenosyl-L-methionine contacts are provided by residues Gly151 to Glu152, Ser181, Ser204 to His206, and Asn280. Cys323 acts as the S-methylcysteine intermediate in catalysis.

This sequence belongs to the radical SAM superfamily. RlmN family. Requires [4Fe-4S] cluster as cofactor.

It localises to the cytoplasm. This is Probable RNA methyltransferase azo0122 from Azoarcus sp. (strain BH72).